A 203-amino-acid polypeptide reads, in one-letter code: Urease accessory protein UreG (203 aa).

14–21 contacts GTP; the sequence is GPVGSGKT.

This sequence belongs to the SIMIBI class G3E GTPase family. UreG subfamily. As to quaternary structure, homodimer. UreD, UreF and UreG form a complex that acts as a GTP-hydrolysis-dependent molecular chaperone, activating the urease apoprotein by helping to assemble the nickel containing metallocenter of UreC. The UreE protein probably delivers the nickel.

It is found in the cytoplasm. Functionally, facilitates the functional incorporation of the urease nickel metallocenter. This process requires GTP hydrolysis, probably effectuated by UreG. The polypeptide is Urease accessory protein UreG (Rhizobium johnstonii (strain DSM 114642 / LMG 32736 / 3841) (Rhizobium leguminosarum bv. viciae)).